Consider the following 343-residue polypeptide: Heat-inducible transcription repressor HrcA (343 aa).

It belongs to the HrcA family.

Functionally, negative regulator of class I heat shock genes (grpE-dnaK-dnaJ and groELS operons). Prevents heat-shock induction of these operons. The protein is Heat-inducible transcription repressor HrcA of Alkaliphilus metalliredigens (strain QYMF).